A 232-amino-acid polypeptide reads, in one-letter code: DOA4-independent degradation protein 4 (232 aa).

Residues 14 to 97 (PQERLKKNQR…AISLRIQAVR (84 aa)) adopt a coiled-coil conformation. The tract at residues 183–232 (LQSTPQNLVSNAPIAETAMGIPEPIGAGSEFHGNPDDDLQARLNTLKKQT) is interaction with VPS4. Positions 203–232 (IPEPIGAGSEFHGNPDDDLQARLNTLKKQT) are disordered. The MIT-interacting motif signature appears at 219 to 229 (DDLQARLNTLK).

The protein belongs to the SNF7 family. Core component of the ESCRT-III complex (endosomal sorting required for transport complex III). ESCRT-III appears to be sequentially assembled as a flat lattice on the endosome membrane and forms a transient 450 kDa complex that contains DID4, oligomerized SNF7, VPS20 and VPS24. SNF7 oligomerization into a membrane-associated filament is nucleated by association of SNF7 with VPS20; the process is terminated through association of VPS24, possibly by capping the SNF7 filament. VPS24 subsequently associates with DID4/VPS2.

It localises to the cytoplasm. Its subcellular location is the endosome membrane. Required for the sorting and concentration of proteins resulting in the entry of these proteins into the invaginating vesicles of the multivesicular body (MVB). Acts a component of the ESCRT-III complex, which appears to be critical for late steps in MVB sorting, such as membrane invagination and final cargo sorting and recruitment of late-acting components of the sorting machinery. The MVB pathway requires the sequential function of ESCRT-O, -I,-II and -III complex assemblies. Can directly stimulate VPS4 ATPase activity. The DID4/VPS2-VPS24 subcomplex is required for the VPS4-dependent dissociation of ESCRT-III. The protein is DOA4-independent degradation protein 4 (DID4) of Saccharomyces cerevisiae (strain ATCC 204508 / S288c) (Baker's yeast).